The following is a 147-amino-acid chain: Allograft inflammatory factor 1 (147 aa).

Ser2 is subject to N-acetylserine. Lys11 bears the N6-acetyllysine mark. A Phosphoserine modification is found at Ser39. 2 EF-hand domains span residues 45 to 80 (SKLEGFKEKYMEFDLNGNGDIDIMSLKRMLEKLGVP) and 81 to 115 (KTHLELKKLIGEVSSGSGETFSYPDFLRMMLGKRS). Positions 58, 60, 62, 64, 100, and 105 each coordinate Ca(2+). Residues 128-147 (AREKEKPTGPPAKKAISELP) form a disordered region.

As to quaternary structure, homodimer (Potential). Monomer. Interacts with LCP1. Post-translationally, phosphorylated on serine residues.

Its subcellular location is the cytoplasm. It localises to the cytoskeleton. The protein resides in the cell projection. It is found in the ruffle membrane. The protein localises to the phagocytic cup. Its function is as follows. Actin-binding protein that enhances membrane ruffling and RAC activation. Enhances the actin-bundling activity of LCP1. Binds calcium. Plays a role in RAC signaling and in phagocytosis. May play a role in macrophage activation and function. Promotes the proliferation of vascular smooth muscle cells and of T-lymphocytes. Enhances lymphocyte migration. Plays a role in vascular inflammation. This chain is Allograft inflammatory factor 1 (AIF1), found in Macaca mulatta (Rhesus macaque).